Consider the following 574-residue polypeptide: DNA polymerase I (574 aa).

In terms of domain architecture, 3'-5' exonuclease spans 4–161; that stretch reads EYVTGEEGLK…ELFPKMRDML (158 aa).

The protein belongs to the DNA polymerase type-A family.

It carries out the reaction DNA(n) + a 2'-deoxyribonucleoside 5'-triphosphate = DNA(n+1) + diphosphate. This Aquifex aeolicus (strain VF5) protein is DNA polymerase I (polA).